The primary structure comprises 509 residues: Cobyric acid synthase (509 aa).

The GATase cobBQ-type domain maps to 262–459 (ELKVGIIKLP…IHGIFENDDW (198 aa)). The Nucleophile role is filled by C343. The active site involves H451.

This sequence belongs to the CobB/CobQ family. CobQ subfamily.

It participates in cofactor biosynthesis; adenosylcobalamin biosynthesis. In terms of biological role, catalyzes amidations at positions B, D, E, and G on adenosylcobyrinic A,C-diamide. NH(2) groups are provided by glutamine, and one molecule of ATP is hydrogenolyzed for each amidation. This Prochlorococcus marinus subsp. pastoris (strain CCMP1986 / NIES-2087 / MED4) protein is Cobyric acid synthase.